A 129-amino-acid polypeptide reads, in one-letter code: UPF0325 protein ECA1027 (129 aa).

Belongs to the UPF0325 family.

In Pectobacterium atrosepticum (strain SCRI 1043 / ATCC BAA-672) (Erwinia carotovora subsp. atroseptica), this protein is UPF0325 protein ECA1027.